We begin with the raw amino-acid sequence, 218 residues long: MQTCSGKGIKMAFLDVQSSSTPQSLPLLLFSHREGGGRGAGDPGAPAVVPAPVSAPRPASSPARSESRSPPLTLISRHITCCSCESPGDVLLSGRGGGGGGGGGARTGGGEGEDRRPRPDFSRVTAVAIPGWMEVESPPHPPPQPQVCPTPSQGAPGHGRAGLPEGKGPGGRDWLRSQSSRCSRATLFGHRAPSPAAPRRGRLPAPGFPSLHSAVSLF.

Disordered regions lie at residues 30–71 (FSHR…RSPP), 93–120 (SGRGGGGGGGGGARTGGGEGEDRRPRPD), and 133–209 (MEVE…PGFP). The segment covering 43 to 71 (PGAPAVVPAPVSAPRPASSPARSESRSPP) has biased composition (low complexity). Residues 94 to 110 (GRGGGGGGGGGARTGGG) show a composition bias toward gly residues. Positions 138-148 (PPHPPPQPQVC) are enriched in pro residues. Over residues 156-171 (PGHGRAGLPEGKGPGG) the composition is skewed to gly residues. A compositionally biased stretch (low complexity) spans 191-209 (RAPSPAAPRRGRLPAPGFP).

This is an uncharacterized protein from Homo sapiens (Human).